The following is a 300-amino-acid chain: Protein FANTASTIC FOUR 4 (300 aa).

Residues 30-56 (PQLSTPLKSHFQNSSIAPQDNPITINA) are compositionally biased toward polar residues. Disordered regions lie at residues 30 to 104 (PQLS…SPSS), 142 to 170 (TMET…LPPP), and 227 to 264 (TETK…KEEE). Composition is skewed to low complexity over residues 58–88 (SLPS…NSSS) and 142–151 (TMETRTTSTT). The FAF domain maps to 166 to 217 (SLPPPLTSMIGFDCIEVKSHRENGRLVMMATRPPPRNRCLQDRSNGCVRLAI). A compositionally biased stretch (acidic residues) spans 233 to 262 (KEEEEEETIETVRDNEEEIPEYKEEEEEKE).

Belongs to the fantastic four family. In terms of tissue distribution, expressed in the shoot apex and young siliques. Detected in provascular and vascular tissue, but not in the vegetative meristem. In inflorescences, restricted to the base of the flower and to the vasculature of the stem and the pedicels, but absent from young flowers. Detected in the center of the inflorescence meristem.

Regulates the size of the shoot meristem by modulating the CLV3-WUS feedback loop. Can repress WUS but is under negative control by CLV3. This is Protein FANTASTIC FOUR 4 (FAF4) from Arabidopsis thaliana (Mouse-ear cress).